A 471-amino-acid polypeptide reads, in one-letter code: MKIKTRFAPSPTGYLHVGGARTALYSWLFARNHGGEFVLRIEDTDLERSTPEAIEAIMDGMNWLNLEWDEGPYYQTKRFDRYNAVIDQMLEEGTAYKCYCSKERLEALREEQMAKGEKPRYDGRCRHSHEHHADDEPCVVRFANPQEGSVVFDDQIRGPIEFSNQELDDLIIRRTDGSPTYNFCVVVDDWDMEITHVIRGEDHINNTPRQINILKALKAPVPVYAHVSMINGDDGKKLSKRHGAVSVMQYRDDGYLPEALLNYLVRLGWSHGDQEIFTREEMIKYFALNAVSKSASAFNTDKLLWLNHHYINALPPEYVATHLQWHIEQENIDTRNGPQLADLVKLLGERCKTLKEMAQSCRYFYEDFAEFDADAAKKHLRPVARQPLEVVRDKLTAITDWTAENVHHAIQATADELEVGMGKVGMPLRVAVTGAGQSPALDVTVHAIGKTRSIERINKALAFIAERENQQ.

The 'HIGH' region motif lies at 9-19 (PSPTGYLHVGG). Residues Cys98, Cys100, Cys125, and His127 each contribute to the Zn(2+) site. The 'KMSKS' region signature appears at 237–241 (KLSKR). Lys240 is an ATP binding site.

The protein belongs to the class-I aminoacyl-tRNA synthetase family. Glutamate--tRNA ligase type 1 subfamily. As to quaternary structure, monomer. The cofactor is Zn(2+).

Its subcellular location is the cytoplasm. It carries out the reaction tRNA(Glu) + L-glutamate + ATP = L-glutamyl-tRNA(Glu) + AMP + diphosphate. Catalyzes the attachment of glutamate to tRNA(Glu) in a two-step reaction: glutamate is first activated by ATP to form Glu-AMP and then transferred to the acceptor end of tRNA(Glu). The sequence is that of Glutamate--tRNA ligase from Escherichia coli O6:K15:H31 (strain 536 / UPEC).